The primary structure comprises 595 residues: P2X purinoceptor 7 (595 aa).

At 1 to 22 (MPACCSWNDVFQYETNKVTRIQ) the chain is on the cytoplasmic side. The S-palmitoyl cysteine moiety is linked to residue Cys-4. Residues 23–46 (SVNYGTIKWILHMTVFSYVSFALM) traverse the membrane as a helical segment. The Extracellular portion of the chain corresponds to 47 to 328 (SDKLYQRKEP…ILVFGTGGKF (282 aa)). A glycan (N-linked (GlcNAc...) asparagine) is linked at Asn-74. 3 cysteine pairs are disulfide-bonded: Cys-119/Cys-168, Cys-129/Cys-152, and Cys-135/Cys-162. An ADP-ribosylarginine modification is found at Arg-125. N-linked (GlcNAc...) asparagine glycosylation occurs at Asn-187. Thr-189 contributes to the ATP binding site. Residues Asn-202 and Asn-213 are each glycosylated (N-linked (GlcNAc...) asparagine). The cysteines at positions 216 and 226 are disulfide-linked. Asn-241 carries N-linked (GlcNAc...) asparagine glycosylation. A disulfide bridge links Cys-260 with Cys-269. An N-linked (GlcNAc...) asparagine glycan is attached at Asn-284. ATP is bound by residues Arg-294 and Lys-311. Residues 329-353 (DIIQLVVYIGSTLSYFGLATVCIDL) traverse the membrane as a helical segment. Ser-342 contributes to the Na(+) binding site. At 354-595 (IINTYASTCC…GQYSGFKYPY (242 aa)) the chain is on the cytoplasmic side. Residues 360 to 377 (STCCRSRVYPSCKCCEPC) are C-cys anchor. S-palmitoyl cysteine attachment occurs at residues Cys-362, Cys-363, Cys-374, and Cys-377. Positions 395–595 (KPTLKYVSFV…GQYSGFKYPY (201 aa)) are cytoplasmic ballast. Zn(2+) is bound by residues Cys-479, Cys-499, and Cys-506. Arg-546, His-547, Tyr-550, and Ala-567 together coordinate GTP. Cys-572 contributes to the Zn(2+) binding site. Residues Lys-583, Ser-589, and Gly-590 each contribute to the GTP site.

The protein belongs to the P2X receptor family. As to quaternary structure, homotrimer. Interacts with LAMA3, ITGB2, ACTB, ACTN4, SVIL, MPP3, HSPA1, HSPCB, HSPA8, PIK230 and PTPRB. Interacts (via C-terminus) with EMP2. In terms of processing, phosphorylation results in its inactivation. Post-translationally, ADP-ribosylation at Arg-125 is necessary and sufficient to activate P2RX7 and gate the channel. Palmitoylation of several cysteines in the C-terminal cytoplasmic tail is required for efficient localization to cell surface. Palmitoylation prevents channel desensitization by physically anchoring the palmitoylated groups to the membrane.

The protein localises to the cell membrane. The catalysed reaction is Ca(2+)(in) = Ca(2+)(out). It carries out the reaction K(+)(in) = K(+)(out). It catalyses the reaction Na(+)(in) = Na(+)(out). Its activity is regulated as follows. Activated by high extracellular ATP levels (0.1-2.5 mM). The synthetic analog 2'(3')-O-(4-benzoylbenzoyl)ATP (BzATP) acts as a potent agonist. Does not undergo desensitization, instead, undergoes a facilitation process where currents progressively increase with repetitive or prolonged agonist application. Palmitoylation prevents channel desensitization. The permeability of the P2RX7 channel is modulated by the amount of cholesterol in the plasma membrane. Its function is as follows. ATP-gated nonselective transmembrane cation channel that requires high millimolar concentrations of ATP for activation. Upon ATP binding, it rapidly opens to allow the influx of small cations Na(+) and Ca(2+), and the K(+) efflux. Also has the ability to form a large pore in the cell membrane, allowing the passage of large cationic molecules. In microglia, may mediate the transmembrane transport of exogenous NADPH. In immune cells, P2RX7 acts as a molecular sensor in pathological inflammatory states by detecting and responding to high local concentrations of extracellar ATP. In microglial cells, P2RX7 activation leads to the release of pro-inflammatory cytokines, such as IL-1beta and IL-18, through the activation of the NLRP3 inflammasome and caspase-1. Cooperates with KCNK6 to activate NLRP3 inflammasome. Activates death pathways leading to apoptosis and autophagy. Activates death pathways leading to pyroptosis. In terms of biological role, has a higher affinity for ATP, slower deactivation and an increased propensity to form large cation-permeable pores. The protein is P2X purinoceptor 7 (P2rx7) of Rattus norvegicus (Rat).